The sequence spans 98 residues: uncharacterized protein (98 aa).

The next 2 helical transmembrane spans lie at 2 to 22 (IVTL…GLWW) and 70 to 90 (AAKA…LPIL).

Its subcellular location is the cell membrane. This is an uncharacterized protein from Sinorhizobium fredii (strain NBRC 101917 / NGR234).